The sequence spans 140 residues: Probable glycine cleavage system H protein (140 aa).

The Lipoyl-binding domain maps to 22–114; sequence RAIIGITSYA…YEEGWIVVLE (93 aa). Lys63 carries the N6-lipoyllysine modification.

The protein belongs to the GcvH family. As to quaternary structure, the glycine cleavage system is composed of four proteins: P, T, L and H. (R)-lipoate is required as a cofactor.

Its function is as follows. The glycine cleavage system catalyzes the degradation of glycine. The H protein shuttles the methylamine group of glycine from the P protein to the T protein. In Korarchaeum cryptofilum (strain OPF8), this protein is Probable glycine cleavage system H protein.